The sequence spans 246 residues: Carboxy-S-adenosyl-L-methionine synthase (246 aa).

Residues Tyr39, 64-66 (GCS), 89-90 (DN), 117-118 (DI), Asn132, and Arg199 contribute to the S-adenosyl-L-methionine site.

Belongs to the class I-like SAM-binding methyltransferase superfamily. Cx-SAM synthase family. As to quaternary structure, homodimer.

The catalysed reaction is prephenate + S-adenosyl-L-methionine = carboxy-S-adenosyl-L-methionine + 3-phenylpyruvate + H2O. Catalyzes the conversion of S-adenosyl-L-methionine (SAM) to carboxy-S-adenosyl-L-methionine (Cx-SAM). In Enterobacter sp. (strain 638), this protein is Carboxy-S-adenosyl-L-methionine synthase.